Reading from the N-terminus, the 555-residue chain is Formate--tetrahydrofolate ligase (555 aa).

Position 65-72 (65-72 (TPAGEGKS)) interacts with ATP.

Belongs to the formate--tetrahydrofolate ligase family.

It catalyses the reaction (6S)-5,6,7,8-tetrahydrofolate + formate + ATP = (6R)-10-formyltetrahydrofolate + ADP + phosphate. It functions in the pathway one-carbon metabolism; tetrahydrofolate interconversion. The chain is Formate--tetrahydrofolate ligase from Staphylococcus haemolyticus (strain JCSC1435).